The sequence spans 145 residues: Histone H2B.7 (145 aa).

Basic and acidic residues predominate over residues 1–30 (MAPKAEKKPAEKKPVEEKSKAEKAPAEKKP). Residues 1–53 (MAPKAEKKPAEKKPVEEKSKAEKAPAEKKPKAGKKLPKEAGAGGDKKKKMKKK) are disordered. At Ala-2 the chain carries N,N,N-trimethylalanine; alternate. Ala-2 bears the N,N-dimethylalanine; alternate mark. At Ala-2 the chain carries N-methylalanine; alternate. At Lys-4 the chain carries N6-methyllysine; partial. Residues Lys-7 and Lys-12 each carry the N6-acetyllysine modification. An N6,N6-dimethyllysine modification is found at Lys-13. Residues Lys-23, Lys-28, and Lys-34 each carry the N6-acetyllysine modification. Lys-35 is subject to N6-acetyllysine; partial. A Glycyl lysine isopeptide (Lys-Gly) (interchain with G-Cter in ubiquitin) cross-link involves residue Lys-141.

This sequence belongs to the histone H2B family. In terms of assembly, the nucleosome is a histone octamer containing two molecules each of H2A, H2B, H3 and H4 assembled in one H3-H4 heterotetramer and two H2A-H2B heterodimers. The octamer wraps approximately 147 bp of DNA. In terms of processing, can be acetylated to form H2BK6ac, H2BK11ac, H2BK22ac, H2BK27ac H2BK33ac and H2BK34ac. Post-translationally, mono-, di- or trimethylated at the N-terminus to form H2BA1me1/2/3. H2BA1me2 and H2BA1me3 may be methylated and/or acetylated to form H2BA1me2K3me1, H2BA1me2K3me1K6ac, H2BA1me2K6ac H2BA1me3K6ac, H2BA1me3K6acK11ac and H2BA1me2K3me1K6acK11ac. Monoubiquitinated by BRE1 to form H2BK143ub1 and deubiquitinated by UBP26. Required for heterochromatic histone H3 di- and trimethylation at H3K4me. May give a specific tag for epigenetic transcriptional activation.

The protein localises to the nucleus. Its subcellular location is the chromosome. Its function is as follows. Core component of nucleosome. Nucleosomes wrap and compact DNA into chromatin, limiting DNA accessibility to the cellular machineries which require DNA as a template. Histones thereby play a central role in transcription regulation, DNA repair, DNA replication and chromosomal stability. DNA accessibility is regulated via a complex set of post-translational modifications of histones, also called histone code, and nucleosome remodeling. This Arabidopsis thaliana (Mouse-ear cress) protein is Histone H2B.7.